The chain runs to 249 residues: Methylthioribulose-1-phosphate dehydratase (249 aa).

Cys102 contributes to the substrate binding site. The Zn(2+) site is built by His120 and His122. Glu148 acts as the Proton donor/acceptor in catalysis. His205 is a Zn(2+) binding site.

This sequence belongs to the aldolase class II family. MtnB subfamily. Zn(2+) serves as cofactor.

It localises to the cytoplasm. It catalyses the reaction 5-(methylsulfanyl)-D-ribulose 1-phosphate = 5-methylsulfanyl-2,3-dioxopentyl phosphate + H2O. It functions in the pathway amino-acid biosynthesis; L-methionine biosynthesis via salvage pathway; L-methionine from S-methyl-5-thio-alpha-D-ribose 1-phosphate: step 2/6. Functionally, catalyzes the dehydration of methylthioribulose-1-phosphate (MTRu-1-P) into 2,3-diketo-5-methylthiopentyl-1-phosphate (DK-MTP-1-P). The chain is Methylthioribulose-1-phosphate dehydratase from Botryotinia fuckeliana (strain B05.10) (Noble rot fungus).